Here is a 556-residue protein sequence, read N- to C-terminus: Oxygen-dependent choline dehydrogenase (556 aa).

Residue aspartate 4–glutamate 33 coordinates FAD. Residue histidine 473 is the Proton acceptor of the active site.

The protein belongs to the GMC oxidoreductase family. FAD is required as a cofactor.

The enzyme catalyses choline + A = betaine aldehyde + AH2. The catalysed reaction is betaine aldehyde + NAD(+) + H2O = glycine betaine + NADH + 2 H(+). Its pathway is amine and polyamine biosynthesis; betaine biosynthesis via choline pathway; betaine aldehyde from choline (cytochrome c reductase route): step 1/1. Involved in the biosynthesis of the osmoprotectant glycine betaine. Catalyzes the oxidation of choline to betaine aldehyde and betaine aldehyde to glycine betaine at the same rate. The polypeptide is Oxygen-dependent choline dehydrogenase (Escherichia coli O6:K15:H31 (strain 536 / UPEC)).